The following is a 233-amino-acid chain: Pre-hexon-linking protein VIII (233 aa).

Residue T64 is modified to Phosphothreonine; by host. A propeptide spanning residues 112-163 is cleaved from the precursor; that stretch reads SRHVRFRGRSSPYSPGPIKRLIIRGRGIQLNDEVVSSLTGLRPDGVFQLGGA. S180 is subject to Phosphoserine; by host.

Belongs to the adenoviridae hexon-linking protein family. In terms of assembly, interacts with the peripentonal hexons as well as the hexons in the facets. Part of a complex composed of the core-capsid bridging protein, the endosome lysis protein VI and the hexon-linking protein VIII; these interactions bridge the virus core to the capsid. In terms of processing, cleaved by the viral protease during virion maturation. May cause the middle segment to be shed from the capsid.

Its subcellular location is the virion. The protein localises to the host nucleus. In terms of biological role, structural component of the virion that acts as a cement protein on the capsid interior and which glue the peripentonal hexons and group-of-nine hexons together. The sequence is that of Pre-hexon-linking protein VIII from Homo sapiens (Human).